The chain runs to 288 residues: Bifunctional protein FolD (288 aa).

Residues 166–168 and Ile232 contribute to the NADP(+) site; that span reads GAS.

The protein belongs to the tetrahydrofolate dehydrogenase/cyclohydrolase family. Homodimer.

It carries out the reaction (6R)-5,10-methylene-5,6,7,8-tetrahydrofolate + NADP(+) = (6R)-5,10-methenyltetrahydrofolate + NADPH. It catalyses the reaction (6R)-5,10-methenyltetrahydrofolate + H2O = (6R)-10-formyltetrahydrofolate + H(+). It functions in the pathway one-carbon metabolism; tetrahydrofolate interconversion. In terms of biological role, catalyzes the oxidation of 5,10-methylenetetrahydrofolate to 5,10-methenyltetrahydrofolate and then the hydrolysis of 5,10-methenyltetrahydrofolate to 10-formyltetrahydrofolate. The protein is Bifunctional protein FolD of Cronobacter sakazakii (strain ATCC BAA-894) (Enterobacter sakazakii).